The following is a 313-amino-acid chain: Porphobilinogen deaminase (313 aa).

Residue Cys241 is modified to S-(dipyrrolylmethanemethyl)cysteine.

This sequence belongs to the HMBS family. Monomer. Requires dipyrromethane as cofactor.

The catalysed reaction is 4 porphobilinogen + H2O = hydroxymethylbilane + 4 NH4(+). It participates in porphyrin-containing compound metabolism; protoporphyrin-IX biosynthesis; coproporphyrinogen-III from 5-aminolevulinate: step 2/4. It functions in the pathway porphyrin-containing compound metabolism; chlorophyll biosynthesis. Its function is as follows. Tetrapolymerization of the monopyrrole PBG into the hydroxymethylbilane pre-uroporphyrinogen in several discrete steps. In Chlorobium phaeovibrioides (strain DSM 265 / 1930) (Prosthecochloris vibrioformis (strain DSM 265)), this protein is Porphobilinogen deaminase.